A 486-amino-acid polypeptide reads, in one-letter code: N-succinylglutamate 5-semialdehyde dehydrogenase (486 aa).

Residue 220–225 (GSSRTG) participates in NAD(+) binding. Catalysis depends on residues E243 and C277.

Belongs to the aldehyde dehydrogenase family. AstD subfamily.

The enzyme catalyses N-succinyl-L-glutamate 5-semialdehyde + NAD(+) + H2O = N-succinyl-L-glutamate + NADH + 2 H(+). It functions in the pathway amino-acid degradation; L-arginine degradation via AST pathway; L-glutamate and succinate from L-arginine: step 4/5. Its function is as follows. Catalyzes the NAD-dependent reduction of succinylglutamate semialdehyde into succinylglutamate. The sequence is that of N-succinylglutamate 5-semialdehyde dehydrogenase from Shewanella sediminis (strain HAW-EB3).